Reading from the N-terminus, the 539-residue chain is CTP synthase (539 aa).

Residues 1 to 268 (MADTKYIFVT…DETVLRKVGL (268 aa)) form an amidoligase domain region. Ser-15 provides a ligand contact to CTP. Ser-15 lines the UTP pocket. 16 to 21 (SLGKGI) is an ATP binding site. Tyr-56 serves as a coordination point for L-glutamine. Residue Asp-73 coordinates ATP. The Mg(2+) site is built by Asp-73 and Glu-143. Residues 150-152 (DIE), 189-194 (KTKPTQ), and Lys-225 each bind CTP. Residues 189-194 (KTKPTQ) and Lys-225 contribute to the UTP site. Residues 294–536 (TIALVGKYVE…IREAIKTRKK (243 aa)) enclose the Glutamine amidotransferase type-1 domain. Gly-356 provides a ligand contact to L-glutamine. The Nucleophile; for glutamine hydrolysis role is filled by Cys-383. Residues 384–387 (LGMQ), Glu-407, and Arg-464 each bind L-glutamine. Residues His-509 and Glu-511 contribute to the active site.

The protein belongs to the CTP synthase family. Homotetramer.

It catalyses the reaction UTP + L-glutamine + ATP + H2O = CTP + L-glutamate + ADP + phosphate + 2 H(+). The catalysed reaction is L-glutamine + H2O = L-glutamate + NH4(+). The enzyme catalyses UTP + NH4(+) + ATP = CTP + ADP + phosphate + 2 H(+). Its pathway is pyrimidine metabolism; CTP biosynthesis via de novo pathway; CTP from UDP: step 2/2. Its activity is regulated as follows. Allosterically activated by GTP, when glutamine is the substrate; GTP has no effect on the reaction when ammonia is the substrate. The allosteric effector GTP functions by stabilizing the protein conformation that binds the tetrahedral intermediate(s) formed during glutamine hydrolysis. Inhibited by the product CTP, via allosteric rather than competitive inhibition. Its function is as follows. Catalyzes the ATP-dependent amination of UTP to CTP with either L-glutamine or ammonia as the source of nitrogen. Regulates intracellular CTP levels through interactions with the four ribonucleotide triphosphates. The polypeptide is CTP synthase (Porphyromonas gingivalis (strain ATCC 33277 / DSM 20709 / CIP 103683 / JCM 12257 / NCTC 11834 / 2561)).